A 377-amino-acid polypeptide reads, in one-letter code: Protein-arginine rhamnosyltransferase (377 aa).

Y15 lines the dTDP-beta-L-rhamnose pocket. The active-site Proton acceptor is D17. DTDP-beta-L-rhamnose-binding positions include Y193, Q255, and 271–275 (RGEDS). E273 is a catalytic residue.

Belongs to the glycosyltransferase 104 family.

It carries out the reaction dTDP-beta-L-rhamnose + L-arginyl-[protein] = N(omega)-(alpha-L-rhamnosyl)-L-arginyl-[protein] + dTDP + H(+). In terms of biological role, protein-arginine rhamnosyltransferase that catalyzes the transfer of a single rhamnose to elongation factor P (EF-P) on 'Lys-32', a modification required for EF-P-dependent rescue of polyproline stalled ribosomes. This Pseudomonas putida (strain ATCC 47054 / DSM 6125 / CFBP 8728 / NCIMB 11950 / KT2440) protein is Protein-arginine rhamnosyltransferase.